The chain runs to 100 residues: Aspartyl/glutamyl-tRNA(Asn/Gln) amidotransferase subunit C (100 aa).

Belongs to the GatC family. In terms of assembly, heterotrimer of A, B and C subunits.

It carries out the reaction L-glutamyl-tRNA(Gln) + L-glutamine + ATP + H2O = L-glutaminyl-tRNA(Gln) + L-glutamate + ADP + phosphate + H(+). The catalysed reaction is L-aspartyl-tRNA(Asn) + L-glutamine + ATP + H2O = L-asparaginyl-tRNA(Asn) + L-glutamate + ADP + phosphate + 2 H(+). In terms of biological role, allows the formation of correctly charged Asn-tRNA(Asn) or Gln-tRNA(Gln) through the transamidation of misacylated Asp-tRNA(Asn) or Glu-tRNA(Gln) in organisms which lack either or both of asparaginyl-tRNA or glutaminyl-tRNA synthetases. The reaction takes place in the presence of glutamine and ATP through an activated phospho-Asp-tRNA(Asn) or phospho-Glu-tRNA(Gln). The chain is Aspartyl/glutamyl-tRNA(Asn/Gln) amidotransferase subunit C from Janthinobacterium sp. (strain Marseille) (Minibacterium massiliensis).